The following is a 270-amino-acid chain: Tryptophan synthase alpha chain (270 aa).

Active-site proton acceptor residues include Glu51 and Asp62.

The protein belongs to the TrpA family. Tetramer of two alpha and two beta chains.

It carries out the reaction (1S,2R)-1-C-(indol-3-yl)glycerol 3-phosphate + L-serine = D-glyceraldehyde 3-phosphate + L-tryptophan + H2O. It participates in amino-acid biosynthesis; L-tryptophan biosynthesis; L-tryptophan from chorismate: step 5/5. In terms of biological role, the alpha subunit is responsible for the aldol cleavage of indoleglycerol phosphate to indole and glyceraldehyde 3-phosphate. The polypeptide is Tryptophan synthase alpha chain (Methanothermobacter thermautotrophicus (strain ATCC 29096 / DSM 1053 / JCM 10044 / NBRC 100330 / Delta H) (Methanobacterium thermoautotrophicum)).